Here is a 209-residue protein sequence, read N- to C-terminus: Lipid A acyltransferase PagP (209 aa).

The first 24 residues, 1-24 (MHLKRALITLSLITLPIIPFSSYA), serve as a signal peptide directing secretion. Active-site residues include His81, Asp124, and Ser125.

It belongs to the lipid A palmitoyltransferase family. In terms of assembly, homodimer.

It is found in the cell outer membrane. The enzyme catalyses a lipid A + a 1,2-diacyl-sn-glycero-3-phosphocholine = a hepta-acyl lipid A + a 2-acyl-sn-glycero-3-phosphocholine. It catalyses the reaction a lipid IVA + a 1,2-diacyl-sn-glycero-3-phosphocholine = a lipid IVB + a 2-acyl-sn-glycero-3-phosphocholine. The catalysed reaction is a lipid IIA + a 1,2-diacyl-sn-glycero-3-phosphocholine = a lipid IIB + a 2-acyl-sn-glycero-3-phosphocholine. Its function is as follows. Transfers a fatty acid residue from the sn-1 position of a phospholipid to the N-linked hydroxyfatty acid chain on the proximal unit of lipid A or its precursors. The protein is Lipid A acyltransferase PagP of Pectobacterium parmentieri (strain WPP163) (Pectobacterium wasabiae (strain WPP163)).